The following is a 333-amino-acid chain: Glycerol-3-phosphate dehydrogenase [NAD(P)+] (333 aa).

W13, K33, and K108 together coordinate NADPH. Residues K108 and G138 each coordinate sn-glycerol 3-phosphate. S142 is an NADPH binding site. Positions 193, 246, 256, 257, and 258 each coordinate sn-glycerol 3-phosphate. The active-site Proton acceptor is K193. R257 lines the NADPH pocket. NADPH contacts are provided by V281 and E283.

Belongs to the NAD-dependent glycerol-3-phosphate dehydrogenase family.

The protein resides in the cytoplasm. The catalysed reaction is sn-glycerol 3-phosphate + NAD(+) = dihydroxyacetone phosphate + NADH + H(+). The enzyme catalyses sn-glycerol 3-phosphate + NADP(+) = dihydroxyacetone phosphate + NADPH + H(+). The protein operates within membrane lipid metabolism; glycerophospholipid metabolism. Its function is as follows. Catalyzes the reduction of the glycolytic intermediate dihydroxyacetone phosphate (DHAP) to sn-glycerol 3-phosphate (G3P), the key precursor for phospholipid synthesis. In Bifidobacterium longum (strain DJO10A), this protein is Glycerol-3-phosphate dehydrogenase [NAD(P)+].